A 632-amino-acid polypeptide reads, in one-letter code: Glycerophosphodiester phosphodiesterase domain-containing protein 4 (632 aa).

The Cytoplasmic segment spans residues 1-64 (MEETQDSSSS…GSCCCSRKEQ (64 aa)). Residues 65–85 (FFYMCLVIAFILSVLFLFVWV) form a helical membrane-spanning segment. Topologically, residues 86–114 (ETSNEYNGFDWVVYLGTGCWFFWSILVLS) are extracellular. A helical membrane pass occupies residues 115–135 (AAGIMVAYTTLLLLLGFLLLW). Residues 136 to 147 (ERIELNLHTSHK) are Cytoplasmic-facing. A helical transmembrane segment spans residues 148-168 (VFICLVIVLCSFLLAVLSHFW). Over 169–180 (KDKWLIAGLSLQ) the chain is Extracellular. A helical transmembrane segment spans residues 181 to 201 (IFAPFVHLSLITVMIIISWPL). At 202–240 (SICVARLESEVKVRRYRMADYEQEIQERCNVFQRLRALQ) the chain is on the cytoplasmic side. Residues 241–261 (IAAGLSFLIILLCLYLMPLGI) form a helical membrane-spanning segment. Residues 262 to 542 (YSPCILKKEN…SRPLFFMTPG (281 aa)) lie on the Extracellular side of the membrane. Residues 276-533 (PTLFGHRGAP…DNIELLNQLS (258 aa)) enclose the GP-PDE domain. A divalent metal cation is bound by residues E308, D310, and H323. N-linked (GlcNAc...) asparagine glycans are attached at residues N343, N349, N384, and N473. The helical transmembrane segment at 543–563 (FYMFMWLFLDIASAVIIGFVF) threads the bilayer. Residues 564 to 632 (CYNWIKEIKR…QKTEPKTENL (69 aa)) are Cytoplasmic-facing. Positions 596–632 (ENNDASQQKPEVAPTSANLAPENMIELQKTEPKTENL) are disordered. Basic and acidic residues predominate over residues 623–632 (QKTEPKTENL).

It belongs to the glycerophosphoryl diester phosphodiesterase family. Detected in testis, in particular in spermatocytes.

The protein resides in the cytoplasm. It is found in the membrane. This chain is Glycerophosphodiester phosphodiesterase domain-containing protein 4 (Gdpd4), found in Mus musculus (Mouse).